A 304-amino-acid chain; its full sequence is UDP-N-acetylenolpyruvoylglucosamine reductase (304 aa).

The FAD-binding PCMH-type domain occupies 33–213; it reads IGGPADIMVI…LEITRDLTER (181 aa). The active site involves arginine 177. The active-site Proton donor is serine 227. Glutamate 297 is a catalytic residue.

This sequence belongs to the MurB family. It depends on FAD as a cofactor.

The protein localises to the cytoplasm. It catalyses the reaction UDP-N-acetyl-alpha-D-muramate + NADP(+) = UDP-N-acetyl-3-O-(1-carboxyvinyl)-alpha-D-glucosamine + NADPH + H(+). It participates in cell wall biogenesis; peptidoglycan biosynthesis. Functionally, cell wall formation. The chain is UDP-N-acetylenolpyruvoylglucosamine reductase from Alkaliphilus oremlandii (strain OhILAs) (Clostridium oremlandii (strain OhILAs)).